Reading from the N-terminus, the 450-residue chain is Phosphoglucosamine mutase (450 aa).

Ser-101 acts as the Phosphoserine intermediate in catalysis. Positions 101, 243, 245, and 247 each coordinate Mg(2+). Ser-101 is subject to Phosphoserine.

Belongs to the phosphohexose mutase family. The cofactor is Mg(2+). Post-translationally, activated by phosphorylation.

The enzyme catalyses alpha-D-glucosamine 1-phosphate = D-glucosamine 6-phosphate. Catalyzes the conversion of glucosamine-6-phosphate to glucosamine-1-phosphate. The chain is Phosphoglucosamine mutase from Desulfotalea psychrophila (strain LSv54 / DSM 12343).